Here is a 234-residue protein sequence, read N- to C-terminus: Protein spitz (234 aa).

An N-terminal signal peptide occupies residues 1–28 (MHSTMSVQHGLVALVLIGCLAHPWHVEA). The Lumenal segment spans residues 29 to 143 (CSSRTVPKPR…RPRPMLEKAS (115 aa)). Residues 33–71 (TVPKPRSSISSSMSGTALPPTQAPVTSSTTMRTTTTTTP) are disordered. Residues 56–71 (PVTSSTTMRTTTTTTP) show a composition bias toward low complexity. N74 is a glycosylation site (N-linked (GlcNAc...) asparagine). In terms of domain architecture, EGF-like spans 78–122 (PTYKCPETFDAWYCLNDAHCFAVKIADLPVYSCECAIGFMGQRCE). Disulfide bonds link C82/C97, C91/C110, and C112/C121. A helical membrane pass occupies residues 144-164 (IASGAMCALVFMLFVCLAFYL). Residues 165 to 234 (RFEQRAAKKA…SFAIRRSNKL (70 aa)) lie on the Cytoplasmic side of the membrane.

As to quaternary structure, interacts with Star via the lumenal domain. In terms of processing, proteolytic processing by Rhomboid occurs in the Golgi. Cleavage takes place within the transmembrane domain close to residue 144 and the active growth factor is released. Post-translationally, N-glycosylated and O-glycosylated. Expressed throughout the embryo.

It is found in the cell membrane. The protein localises to the endoplasmic reticulum membrane. Its subcellular location is the golgi apparatus membrane. Its function is as follows. Ligand for the EGF receptor (Gurken). Involved in a number of unrelated developmental choices, for example, dorsal-ventral axis formation, glial migration, sensory organ determination, and muscle development. It is required for photoreceptor determination. The protein is Protein spitz (spi) of Drosophila melanogaster (Fruit fly).